The following is a 417-amino-acid chain: Gamma-glutamyl phosphate reductase (417 aa).

Belongs to the gamma-glutamyl phosphate reductase family.

It is found in the cytoplasm. It catalyses the reaction L-glutamate 5-semialdehyde + phosphate + NADP(+) = L-glutamyl 5-phosphate + NADPH + H(+). The protein operates within amino-acid biosynthesis; L-proline biosynthesis; L-glutamate 5-semialdehyde from L-glutamate: step 2/2. Catalyzes the NADPH-dependent reduction of L-glutamate 5-phosphate into L-glutamate 5-semialdehyde and phosphate. The product spontaneously undergoes cyclization to form 1-pyrroline-5-carboxylate. This chain is Gamma-glutamyl phosphate reductase, found in Streptococcus agalactiae serotype Ia (strain ATCC 27591 / A909 / CDC SS700).